The following is a 312-amino-acid chain: Glyoxylate/hydroxypyruvate reductase A (312 aa).

Residue arginine 227 is part of the active site. Histidine 275 functions as the Proton donor in the catalytic mechanism.

Belongs to the D-isomer specific 2-hydroxyacid dehydrogenase family. GhrA subfamily.

Its subcellular location is the cytoplasm. It catalyses the reaction glycolate + NADP(+) = glyoxylate + NADPH + H(+). It carries out the reaction (R)-glycerate + NAD(+) = 3-hydroxypyruvate + NADH + H(+). The enzyme catalyses (R)-glycerate + NADP(+) = 3-hydroxypyruvate + NADPH + H(+). In terms of biological role, catalyzes the NADPH-dependent reduction of glyoxylate and hydroxypyruvate into glycolate and glycerate, respectively. The chain is Glyoxylate/hydroxypyruvate reductase A from Escherichia coli O81 (strain ED1a).